The chain runs to 149 residues: uncharacterized protein (149 aa).

To Rhizobium NGR234A y4oM.

This is an uncharacterized protein from Sinorhizobium fredii (strain NBRC 101917 / NGR234).